Consider the following 105-residue polypeptide: Extracellular guanyl-specific ribonuclease Fl1 (105 aa).

2 disulfides stabilise this stretch: Cys5–Cys101 and Cys23–Cys82. His39 is a catalytic residue. The active-site Proton acceptor is Glu57. His90 acts as the Proton donor in catalysis.

It belongs to the ribonuclease N1/T1 family.

It catalyses the reaction [RNA] containing guanosine + H2O = an [RNA fragment]-3'-guanosine-3'-phosphate + a 5'-hydroxy-ribonucleotide-3'-[RNA fragment].. In Gibberella baccata (Fusarium lateritium), this protein is Extracellular guanyl-specific ribonuclease Fl1.